The following is a 343-amino-acid chain: Protein RecA (343 aa).

Position 65–72 (65–72) interacts with ATP; the sequence is GPESSGKT.

Belongs to the RecA family.

The protein localises to the cytoplasm. In terms of biological role, can catalyze the hydrolysis of ATP in the presence of single-stranded DNA, the ATP-dependent uptake of single-stranded DNA by duplex DNA, and the ATP-dependent hybridization of homologous single-stranded DNAs. It interacts with LexA causing its activation and leading to its autocatalytic cleavage. This Campylobacter jejuni subsp. doylei (strain ATCC BAA-1458 / RM4099 / 269.97) protein is Protein RecA.